The sequence spans 239 residues: Proteasome subunit beta (239 aa).

Residues 1 to 16 (MRQPDSSLPRTGQDHT) show a composition bias toward polar residues. The interval 1–32 (MRQPDSSLPRTGQDHTLSPYEPELGEVPSNDL) is disordered. Residues 1–44 (MRQPDSSLPRTGQDHTLSPYEPELGEVPSNDLSMADLDNVNKTG) constitute a propeptide, removed in mature form; by autocatalysis. Threonine 45 functions as the Nucleophile in the catalytic mechanism.

The protein belongs to the peptidase T1B family. As to quaternary structure, the 20S proteasome core is composed of 14 alpha and 14 beta subunits that assemble into four stacked heptameric rings, resulting in a barrel-shaped structure. The two inner rings, each composed of seven catalytic beta subunits, are sandwiched by two outer rings, each composed of seven alpha subunits. The catalytic chamber with the active sites is on the inside of the barrel. Has a gated structure, the ends of the cylinder being occluded by the N-termini of the alpha-subunits. Is capped at one or both ends by the proteasome regulatory ATPase, PAN.

The protein localises to the cytoplasm. It carries out the reaction Cleavage of peptide bonds with very broad specificity.. The formation of the proteasomal ATPase PAN-20S proteasome complex, via the docking of the C-termini of PAN into the intersubunit pockets in the alpha-rings, triggers opening of the gate for substrate entry. Interconversion between the open-gate and close-gate conformations leads to a dynamic regulation of the 20S proteasome proteolysis activity. Component of the proteasome core, a large protease complex with broad specificity involved in protein degradation. In Natronomonas pharaonis (strain ATCC 35678 / DSM 2160 / CIP 103997 / JCM 8858 / NBRC 14720 / NCIMB 2260 / Gabara) (Halobacterium pharaonis), this protein is Proteasome subunit beta.